The sequence spans 491 residues: Glutamyl-tRNA(Gln) amidotransferase subunit A (491 aa).

Catalysis depends on charge relay system residues lysine 77 and serine 152. Serine 176 (acyl-ester intermediate) is an active-site residue.

It belongs to the amidase family. GatA subfamily. In terms of assembly, heterotrimer of A, B and C subunits.

The catalysed reaction is L-glutamyl-tRNA(Gln) + L-glutamine + ATP + H2O = L-glutaminyl-tRNA(Gln) + L-glutamate + ADP + phosphate + H(+). In terms of biological role, allows the formation of correctly charged Gln-tRNA(Gln) through the transamidation of misacylated Glu-tRNA(Gln) in organisms which lack glutaminyl-tRNA synthetase. The reaction takes place in the presence of glutamine and ATP through an activated gamma-phospho-Glu-tRNA(Gln). The protein is Glutamyl-tRNA(Gln) amidotransferase subunit A of Chlamydia felis (strain Fe/C-56) (Chlamydophila felis).